The following is a 767-amino-acid chain: Phosphoribosylformylglycinamidine synthase subunit PurL (767 aa).

His46 is a catalytic residue. ATP is bound by residues Tyr49 and Lys88. Glu90 contributes to the Mg(2+) binding site. Substrate is bound by residues 91 to 94 (SHNH) and Arg113. His92 acts as the Proton acceptor in catalysis. Asp114 is a Mg(2+) binding site. Gln237 is a binding site for substrate. Asp265 is a Mg(2+) binding site. Position 309–311 (309–311 (ESQ)) interacts with substrate. ATP-binding residues include Asp498 and Gly535. Asn536 is a binding site for Mg(2+). Ser538 lines the substrate pocket.

It belongs to the FGAMS family. In terms of assembly, monomer. Part of the FGAM synthase complex composed of 1 PurL, 1 PurQ and 2 PurS subunits.

The protein resides in the cytoplasm. The enzyme catalyses N(2)-formyl-N(1)-(5-phospho-beta-D-ribosyl)glycinamide + L-glutamine + ATP + H2O = 2-formamido-N(1)-(5-O-phospho-beta-D-ribosyl)acetamidine + L-glutamate + ADP + phosphate + H(+). The protein operates within purine metabolism; IMP biosynthesis via de novo pathway; 5-amino-1-(5-phospho-D-ribosyl)imidazole from N(2)-formyl-N(1)-(5-phospho-D-ribosyl)glycinamide: step 1/2. Part of the phosphoribosylformylglycinamidine synthase complex involved in the purines biosynthetic pathway. Catalyzes the ATP-dependent conversion of formylglycinamide ribonucleotide (FGAR) and glutamine to yield formylglycinamidine ribonucleotide (FGAM) and glutamate. The FGAM synthase complex is composed of three subunits. PurQ produces an ammonia molecule by converting glutamine to glutamate. PurL transfers the ammonia molecule to FGAR to form FGAM in an ATP-dependent manner. PurS interacts with PurQ and PurL and is thought to assist in the transfer of the ammonia molecule from PurQ to PurL. In Anaeromyxobacter sp. (strain Fw109-5), this protein is Phosphoribosylformylglycinamidine synthase subunit PurL.